Reading from the N-terminus, the 134-residue chain is Histone-like protein Rv3852 (134 aa).

Residues methionine 1–serine 10 show a composition bias toward basic and acidic residues. The disordered stretch occupies residues methionine 1 to glutamine 68. Over residues leucine 23–proline 48 the composition is skewed to basic residues. A helical transmembrane segment spans residues proline 111–isoleucine 128.

In terms of assembly, homodimer in solution. Is probably able to self-associate in higher oligomers along the DNA molecules. Interacts with the N-terminal region of Wag31.

The protein resides in the cell inner membrane. Its activity is regulated as follows. Can interact directly in vitro with the compound agrimophol, a phloroglucinol from the A.pilosa plant, whose extracts have been used in traditional Chinese medicine to treat pulmonary infections. Interaction with agrimophol leads to disruption of Rv3852's DNA binding function. In terms of biological role, binds DNA in vitro. It has been proposed that Rv3852 plays a role in nucleoid organization and may function as an anchorage to tether the DNA to the membrane. However, it was later shown that it has no influence on nucleoid shape or compaction. It plays no role in virulence and only a minor role in the control of transcription, and does not appear to function as a typical nucleoid-associated protein. Interacts with Wag31, an important cell shape and cell wall integrity determinant, and facilitates the localization of Wag31 to the cell poles and the cell wall, thus enabling nascent peptidoglycan synthesis. This chain is Histone-like protein Rv3852, found in Mycobacterium tuberculosis (strain ATCC 25618 / H37Rv).